A 421-amino-acid chain; its full sequence is Serine hydroxymethyltransferase (421 aa).

(6S)-5,6,7,8-tetrahydrofolate is bound by residues Leu118 and 122–124 (GHL). Lys226 carries the post-translational modification N6-(pyridoxal phosphate)lysine.

It belongs to the SHMT family. As to quaternary structure, homodimer. Requires pyridoxal 5'-phosphate as cofactor.

Its subcellular location is the cytoplasm. The catalysed reaction is (6R)-5,10-methylene-5,6,7,8-tetrahydrofolate + glycine + H2O = (6S)-5,6,7,8-tetrahydrofolate + L-serine. It participates in one-carbon metabolism; tetrahydrofolate interconversion. The protein operates within amino-acid biosynthesis; glycine biosynthesis; glycine from L-serine: step 1/1. Its function is as follows. Catalyzes the reversible interconversion of serine and glycine with tetrahydrofolate (THF) serving as the one-carbon carrier. This reaction serves as the major source of one-carbon groups required for the biosynthesis of purines, thymidylate, methionine, and other important biomolecules. Also exhibits THF-independent aldolase activity toward beta-hydroxyamino acids, producing glycine and aldehydes, via a retro-aldol mechanism. This chain is Serine hydroxymethyltransferase, found in Mycoplasmopsis agalactiae (strain NCTC 10123 / CIP 59.7 / PG2) (Mycoplasma agalactiae).